A 130-amino-acid chain; its full sequence is MARDVEAQLNYIESLISSVDSQIDTLNKAMIEVQSTIDLLSNGDLASSPEKLISIGSGLFAKGNITIDEDLIVPIGSGIYVAETKERSVERLKKNLEDIKASIQKLLDQRKTLVDQYNTVYATEATRNVK.

It belongs to the prefoldin subunit alpha family. As to quaternary structure, heterohexamer of two alpha and four beta subunits.

It is found in the cytoplasm. Molecular chaperone capable of stabilizing a range of proteins. Seems to fulfill an ATP-independent, HSP70-like function in archaeal de novo protein folding. This chain is Prefoldin subunit alpha (pfdA), found in Thermoplasma acidophilum (strain ATCC 25905 / DSM 1728 / JCM 9062 / NBRC 15155 / AMRC-C165).